Consider the following 239-residue polypeptide: 1-(5-phosphoribosyl)-5-[(5-phosphoribosylamino)methylideneamino] imidazole-4-carboxamide isomerase (239 aa).

The Proton acceptor role is filled by Asp-8. Residue Asp-129 is the Proton donor of the active site.

Belongs to the HisA/HisF family.

The protein localises to the cytoplasm. The enzyme catalyses 1-(5-phospho-beta-D-ribosyl)-5-[(5-phospho-beta-D-ribosylamino)methylideneamino]imidazole-4-carboxamide = 5-[(5-phospho-1-deoxy-D-ribulos-1-ylimino)methylamino]-1-(5-phospho-beta-D-ribosyl)imidazole-4-carboxamide. It participates in amino-acid biosynthesis; L-histidine biosynthesis; L-histidine from 5-phospho-alpha-D-ribose 1-diphosphate: step 4/9. The polypeptide is 1-(5-phosphoribosyl)-5-[(5-phosphoribosylamino)methylideneamino] imidazole-4-carboxamide isomerase (Bacillus mycoides (strain KBAB4) (Bacillus weihenstephanensis)).